The sequence spans 211 residues: Protein-methionine-sulfoxide reductase heme-binding subunit MsrQ (211 aa).

6 helical membrane passes run 10–30 (WLKV…VWAI), 54–74 (FLLA…PLLI), 82–102 (LWCF…ELGV), 116–136 (PYLT…FTST), 153–173 (FVYL…KIIS), and 178–198 (IYAG…LSLF).

It belongs to the MsrQ family. In terms of assembly, heterodimer of a catalytic subunit (MsrP) and a heme-binding subunit (MsrQ). Requires FMN as cofactor. It depends on heme b as a cofactor.

It is found in the cell inner membrane. Its function is as follows. Part of the MsrPQ system that repairs oxidized periplasmic proteins containing methionine sulfoxide residues (Met-O), using respiratory chain electrons. Thus protects these proteins from oxidative-stress damage caused by reactive species of oxygen and chlorine generated by the host defense mechanisms. MsrPQ is essential for the maintenance of envelope integrity under bleach stress, rescuing a wide series of structurally unrelated periplasmic proteins from methionine oxidation, including the primary periplasmic chaperone SurA and the lipoprotein Pal. MsrQ provides electrons for reduction to the reductase catalytic subunit MsrP, using the quinone pool of the respiratory chain. This Escherichia coli O6:H1 (strain CFT073 / ATCC 700928 / UPEC) protein is Protein-methionine-sulfoxide reductase heme-binding subunit MsrQ.